The primary structure comprises 518 residues: Probable malate:quinone oxidoreductase (518 aa).

Residues 495–518 form a disordered region; that stretch reads GAIPATTDGQSTAGTEHTPTAATV. Positions 501-518 are enriched in polar residues; sequence TDGQSTAGTEHTPTAATV.

This sequence belongs to the MQO family. It depends on FAD as a cofactor.

The enzyme catalyses (S)-malate + a quinone = a quinol + oxaloacetate. It functions in the pathway carbohydrate metabolism; tricarboxylic acid cycle; oxaloacetate from (S)-malate (quinone route): step 1/1. This Mycolicibacterium gilvum (strain PYR-GCK) (Mycobacterium gilvum (strain PYR-GCK)) protein is Probable malate:quinone oxidoreductase.